The sequence spans 537 residues: Quadr-hydrophobin (537 aa).

The first 17 residues, 1–17 (MKFITVAAALFASTSLA), serve as a signal peptide directing secretion. Hydrophobin regions lie at residues 63-199 (GGNP…QNPI), 200-299 (GGNP…ENPT), 300-421 (GGNP…QDPL), and 422-537 (GGNP…RAII). 2 N-linked (GlcNAc...) asparagine glycosylation sites follow: Asn-70 and Asn-113. 16 disulfides stabilise this stretch: Cys-134–Cys-183, Cys-144–Cys-174, Cys-145–Cys-157, Cys-184–Cys-195, Cys-234–Cys-283, Cys-244–Cys-274, Cys-245–Cys-257, Cys-284–Cys-295, Cys-356–Cys-405, Cys-366–Cys-396, Cys-367–Cys-379, Cys-406–Cys-417, Cys-471–Cys-520, Cys-481–Cys-511, Cys-482–Cys-494, and Cys-521–Cys-532.

This sequence belongs to the cerato-ulmin hydrophobin family. In terms of assembly, homotetramer. Further self-assembles to form highly ordered films at water-air interfaces through intermolecular interactions.

Its subcellular location is the secreted. It is found in the cell wall. In terms of biological role, aerial growth, conidiation, and dispersal of filamentous fungi in the environment rely upon a capability of their secreting small amphipathic proteins called hydrophobins (HPBs) with low sequence identity. Class I can self-assemble into an outermost layer of rodlet bundles on aerial cell surfaces, conferring cellular hydrophobicity that supports fungal growth, development and dispersal; whereas Class II form highly ordered films at water-air interfaces through intermolecular interactions but contribute nothing to the rodlet structure. This is Quadr-hydrophobin from Cordyceps militaris (Caterpillar fungus).